A 361-amino-acid polypeptide reads, in one-letter code: Phospho-N-acetylmuramoyl-pentapeptide-transferase (361 aa).

The next 10 helical transmembrane spans lie at 27–47 (ILAS…MIRW), 70–90 (GTPT…CLLW), 97–117 (SLWL…VDDY), 134–154 (YFWQ…NASL), 167–187 (TVTW…IVGS), 199–219 (GLAI…AYAS), 236–256 (TGEL…FLWY), 263–283 (VFMG…VAVV), 288–308 (LVLL…ILQV), and 338–358 (KVIV…LATL).

Belongs to the glycosyltransferase 4 family. MraY subfamily. The cofactor is Mg(2+).

The protein localises to the cell inner membrane. It carries out the reaction UDP-N-acetyl-alpha-D-muramoyl-L-alanyl-gamma-D-glutamyl-meso-2,6-diaminopimeloyl-D-alanyl-D-alanine + di-trans,octa-cis-undecaprenyl phosphate = di-trans,octa-cis-undecaprenyl diphospho-N-acetyl-alpha-D-muramoyl-L-alanyl-D-glutamyl-meso-2,6-diaminopimeloyl-D-alanyl-D-alanine + UMP. The protein operates within cell wall biogenesis; peptidoglycan biosynthesis. Catalyzes the initial step of the lipid cycle reactions in the biosynthesis of the cell wall peptidoglycan: transfers peptidoglycan precursor phospho-MurNAc-pentapeptide from UDP-MurNAc-pentapeptide onto the lipid carrier undecaprenyl phosphate, yielding undecaprenyl-pyrophosphoryl-MurNAc-pentapeptide, known as lipid I. In Legionella pneumophila subsp. pneumophila (strain Philadelphia 1 / ATCC 33152 / DSM 7513), this protein is Phospho-N-acetylmuramoyl-pentapeptide-transferase.